Consider the following 599-residue polypeptide: Interleukin-18 receptor accessory protein (599 aa).

A signal peptide spans 1–19 (MLCLGWIFLWLVAGERIKG). Over 20 to 356 (FNISGCSTKK…TQSVQLKEKR (337 aa)) the chain is Extracellular. N-linked (GlcNAc...) asparagine glycosylation is found at Asn-21, Asn-119, and Asn-152. A disulfide bridge connects residues Cys-46 and Cys-126. Ig-like C2-type domains are found at residues 149-235 (PQTN…WTVR) and 251-353 (PDIL…VQLK). Cystine bridges form between Cys-155/Cys-180, Cys-175/Cys-221, Cys-180/Cys-221, and Cys-273/Cys-337. Residue Asn-345 is glycosylated (N-linked (GlcNAc...) asparagine). A helical transmembrane segment spans residues 357–377 (GVVLLYILLGTIGTLVAVLAA). Over 378–599 (SALLYRHWIE…TGRSSQPKEW (222 aa)) the chain is Cytoplasmic. One can recognise a TIR domain in the interval 406 to 559 (KDFDAFVSYA…RFWAKMRYHM (154 aa)). Residue Glu-493 is part of the active site.

Belongs to the interleukin-1 receptor family. As to quaternary structure, forms a ternary complex with IL18 and IL18R1. Within this complex, IL18R1 is involved in ligand-binding and IL18RAP in signaling leading to NF-kappa-B and JNK activation. N-glycosylated. As to expression, detected in adrenal gland, bone marrow, brain, fetal brain, fetal liver, heart, kidney, lung, liver, peripheral blood leukocytes, placenta, prostate, salivary gland, skeletal muscle, spinal cord, testis, thymus, thyroid, trachea and uterus. Strongly expressed in peripheral blood leukocytes and spleen and, to a lesser extent, in colon. Specifically coexpressed with IL18R1 in T-helper 1 (Th1)cells.

It localises to the cell membrane. It catalyses the reaction NAD(+) + H2O = ADP-D-ribose + nicotinamide + H(+). Within the IL18 receptor complex, does not mediate IL18-binding, but involved in IL18-dependent signal transduction, leading to NF-kappa-B and JNK activation. May play a role in IL18-mediated IFNG synthesis from T-helper 1 (Th1) cells. In Homo sapiens (Human), this protein is Interleukin-18 receptor accessory protein.